Reading from the N-terminus, the 742-residue chain is 5-methyltetrahydropteroyltriglutamate--homocysteine methyltransferase (742 aa).

5-methyltetrahydropteroyltri-L-glutamate contacts are provided by residues 18-21 and Lys-112; that span reads REWK. Residues 420–422 and Glu-473 contribute to the L-homocysteine site; that span reads IGS. L-methionine is bound by residues 420 to 422 and Glu-473; that span reads IGS. Trp-550 contributes to the 5-methyltetrahydropteroyltri-L-glutamate binding site. Asp-588 is an L-homocysteine binding site. Asp-588 provides a ligand contact to L-methionine. A 5-methyltetrahydropteroyltri-L-glutamate-binding site is contributed by Glu-594. Residues His-630, Cys-632, and Glu-654 each contribute to the Zn(2+) site. The Proton donor role is filled by His-683. Cys-715 is a binding site for Zn(2+).

The protein belongs to the vitamin-B12 independent methionine synthase family. Requires Zn(2+) as cofactor.

It catalyses the reaction 5-methyltetrahydropteroyltri-L-glutamate + L-homocysteine = tetrahydropteroyltri-L-glutamate + L-methionine. Its pathway is amino-acid biosynthesis; L-methionine biosynthesis via de novo pathway; L-methionine from L-homocysteine (MetE route): step 1/1. Its function is as follows. Catalyzes the transfer of a methyl group from 5-methyltetrahydrofolate to homocysteine resulting in methionine formation. The polypeptide is 5-methyltetrahydropteroyltriglutamate--homocysteine methyltransferase (Staphylococcus aureus (strain MRSA252)).